A 350-amino-acid polypeptide reads, in one-letter code: Neutral protease 2 homolog SNOG_10522 (350 aa).

The N-terminal stretch at 1 to 18 (MKVSSQLAVAALASFATA) is a signal peptide. The propeptide occupies 19-180 (ASVDVHKRET…AKALNKRTAI (162 aa)). 2 cysteine pairs are disulfide-bonded: Cys-184–Cys-251 and Cys-258–Cys-276. His-301 is a Zn(2+) binding site. The active site involves Glu-302. Zn(2+) contacts are provided by His-305 and Asp-316.

This sequence belongs to the peptidase M35 family. Zn(2+) serves as cofactor.

The protein resides in the secreted. The enzyme catalyses Preferential cleavage of bonds with hydrophobic residues in P1'. Also 3-Asn-|-Gln-4 and 8-Gly-|-Ser-9 bonds in insulin B chain.. Its function is as follows. Secreted metalloproteinase that allows assimilation of proteinaceous substrates. Shows high activities on basic nuclear substrates such as histone and protamine. This chain is Neutral protease 2 homolog SNOG_10522, found in Phaeosphaeria nodorum (strain SN15 / ATCC MYA-4574 / FGSC 10173) (Glume blotch fungus).